A 262-amino-acid chain; its full sequence is tRNA pseudouridine synthase B (262 aa).

Asp-77 functions as the Nucleophile in the catalytic mechanism.

It belongs to the pseudouridine synthase TruB family. Type 1 subfamily.

It catalyses the reaction uridine(55) in tRNA = pseudouridine(55) in tRNA. Responsible for synthesis of pseudouridine from uracil-55 in the psi GC loop of transfer RNAs. The polypeptide is tRNA pseudouridine synthase B (Protochlamydia amoebophila (strain UWE25)).